Reading from the N-terminus, the 459-residue chain is uncharacterized protein (459 aa).

Residues 9–67 (KLEVGQTFPVTIKRLGINGEGVGYFKRQVVFIPGALPGEEVVAETTKIQRGFAEAKVKK) form the TRAM domain. The [4Fe-4S] cluster site is built by C80, C86, C89, and C168. Q292, Y321, D342, and D390 together coordinate S-adenosyl-L-methionine. The active-site Nucleophile is the C417.

It belongs to the class I-like SAM-binding methyltransferase superfamily. RNA M5U methyltransferase family.

This is an uncharacterized protein from Bacillus cereus (strain ATCC 10987 / NRS 248).